We begin with the raw amino-acid sequence, 604 residues long: Kelch-like protein 15 (604 aa).

Residues 31–98 (LDVTLLIEEH…MYYGSLELSM (68 aa)) enclose the BTB domain. Positions 133–237 (CAEVMRLLED…TPANIFEKVK (105 aa)) constitute a BACK domain. 5 Kelch repeats span residues 328–379 (FAFL…VIGK), 381–426 (IYAV…VLNG), 428–473 (LYIT…NKSK), 489–542 (KLYV…VLDK), and 544–592 (IMVL…SLHF).

The protein localises to the nucleus. Its pathway is protein modification; protein ubiquitination. In terms of biological role, substrate-specific adapter for an E3 ubiquitin-protein ligase complex. The chain is Kelch-like protein 15 (klhl15) from Danio rerio (Zebrafish).